The chain runs to 417 residues: Methyltransferase/ribosomally synthesized cyclic peptide lentinulin A precursor ledMA (417 aa).

The tract at residues 1–251 is methyltransferase domain; the sequence is METPTLNKSG…GVSTFYIPPK (251 aa). Residues arginine 72, tyrosine 76, and tyrosine 98 contribute to the active site. Tyrosine 98, histidine 100, valine 103, alanine 130, glutamine 172, alanine 213, serine 244, and threonine 245 together coordinate S-adenosyl-L-methionine. Positions 252-378 are clasp domain; it reads ERKEINVDII…WAFRCAMKEM (127 aa). The tract at residues 379 to 399 is precursor leader; the sequence is PISLLDNAKQSMEEASEQGFP. Position 401 is an N-methylisoleucine (isoleucine 401). Residues valine 403 and valine 404 each carry the N-methylvaline modification. Glycine 405 bears the N-methylglycine mark. An N-methylvaline mark is found at valine 406 and valine 407. Glycine 408 carries the N-methylglycine modification. Valine 410 carries the N-methylvaline modification. Glycine 411 carries the N-methylglycine modification. N-methylvaline is present on valine 413.

In the N-terminal section; belongs to the precorrin methyltransferase family. In terms of assembly, homodimer. LedMA automethylates at Ile-401, Val-403, Val-404, Gly-405, Val-406, Val-407, Gly-408, Val-410, Gly-411 and Val-413 before being processed by the prolyloligopeptidase ledP which likely forms a peptidyl ester upon removal of the follower propeptide, which then undergoes macrocyclization with the N-terminus of the modified core peptide. Peptide backbone alpha-N-methylations change the physicochemical properties of amide bonds to provide structural constraints and other favorable characteristics including biological membrane permeability to peptides.

It participates in mycotoxin biosynthesis. Its function is as follows. Fusion protein of the methyltransferase ledM and the lentinulin A core peptide; part of the gene cluster that mediates the biosynthesis of lentinulin A, a highly methylated cyclic dodecapeptide with nematodicidal activity. Lentinulin A derives from the C-terminus of the ledMA protein, and it is the ledMA protein that methylates its own C-terminus using S-adenosyl methionine (SAM). The C-terminus is subsequently cleaved off and macrocyclized by the prolyloligopeptidase ledP to give the final product. This Lentinula edodes (Shiitake mushroom) protein is Methyltransferase/ribosomally synthesized cyclic peptide lentinulin A precursor ledMA.